Here is a 290-residue protein sequence, read N- to C-terminus: Elongation factor Ts (290 aa).

The segment at 80 to 83 (TDFV) is involved in Mg(2+) ion dislocation from EF-Tu.

This sequence belongs to the EF-Ts family.

Its subcellular location is the cytoplasm. Associates with the EF-Tu.GDP complex and induces the exchange of GDP to GTP. It remains bound to the aminoacyl-tRNA.EF-Tu.GTP complex up to the GTP hydrolysis stage on the ribosome. The sequence is that of Elongation factor Ts from Neorickettsia sennetsu (strain ATCC VR-367 / Miyayama) (Ehrlichia sennetsu).